A 186-amino-acid chain; its full sequence is Threonylcarbamoyl-AMP synthase (186 aa).

Residues 3–186 (ELTLDSAVAT…DALSGNVLRS (184 aa)) enclose the YrdC-like domain.

Belongs to the SUA5 family. TsaC subfamily.

The protein localises to the cytoplasm. The enzyme catalyses L-threonine + hydrogencarbonate + ATP = L-threonylcarbamoyladenylate + diphosphate + H2O. Required for the formation of a threonylcarbamoyl group on adenosine at position 37 (t(6)A37) in tRNAs that read codons beginning with adenine. Catalyzes the conversion of L-threonine, HCO(3)(-)/CO(2) and ATP to give threonylcarbamoyl-AMP (TC-AMP) as the acyladenylate intermediate, with the release of diphosphate. The chain is Threonylcarbamoyl-AMP synthase from Stenotrophomonas maltophilia (strain K279a).